The chain runs to 61 residues: Large ribosomal subunit protein bL32 (61 aa).

This sequence belongs to the bacterial ribosomal protein bL32 family.

This is Large ribosomal subunit protein bL32 from Syntrophus aciditrophicus (strain SB).